Reading from the N-terminus, the 229-residue chain is Adenylate kinase 1 (229 aa).

42-47 provides a ligand contact to ATP; sequence GCGKGT. S62 is modified (phosphoserine). Residues S63, R68, 118–121, and Q125 contribute to the AMP site; that span reads GYPR. R156 lines the ATP pocket. AMP contacts are provided by R164 and R175.

The protein belongs to the adenylate kinase family. AK1 subfamily. In terms of tissue distribution, high expression levels in the thorax, suggesting a possible function in the gastrointestinal or reproductive systems.

It is found in the cytoplasm. It catalyses the reaction AMP + ATP = 2 ADP. Catalyzes the reversible transfer of the terminal phosphate group between ATP and AMP. Plays an important role in cellular energy homeostasis and in adenine nucleotide metabolism. In Drosophila melanogaster (Fruit fly), this protein is Adenylate kinase 1.